A 375-amino-acid chain; its full sequence is 23S rRNA (uracil(747)-C(5))-methyltransferase RlmC (375 aa).

[4Fe-4S] cluster-binding residues include Cys-3, Cys-11, Cys-14, and Cys-87. S-adenosyl-L-methionine is bound by residues Gln-212, Phe-241, Glu-262, and Asn-307. The active-site Nucleophile is the Cys-334.

This sequence belongs to the class I-like SAM-binding methyltransferase superfamily. RNA M5U methyltransferase family. RlmC subfamily.

It catalyses the reaction uridine(747) in 23S rRNA + S-adenosyl-L-methionine = 5-methyluridine(747) in 23S rRNA + S-adenosyl-L-homocysteine + H(+). Functionally, catalyzes the formation of 5-methyl-uridine at position 747 (m5U747) in 23S rRNA. In Escherichia fergusonii (strain ATCC 35469 / DSM 13698 / CCUG 18766 / IAM 14443 / JCM 21226 / LMG 7866 / NBRC 102419 / NCTC 12128 / CDC 0568-73), this protein is 23S rRNA (uracil(747)-C(5))-methyltransferase RlmC.